Reading from the N-terminus, the 462-residue chain is MSSVKRNPKKEMISELHSSAAEGNVAKLAGILSHSPSLLNETSENGWTALMYAARNGHPDVVQFLLEKGCDRSLVNKARQTALDIAAFWGYRHIANLLANAKGGKKPWFLTNEVDECENYFSRTLLDRRSDKRNNSDWLQAKESHPTTVYLLFSDLNPLVTLGGNKESSQQPEVRLCQLNYPDVKGYLAQPEKITLVFLGVELEMRKGSPAQAGGVPEEEEDGLVAWFALGIEPGAAEEFKQRHENCYFLHPPMPALLQLKEKEAGVVAQARSVLAWHSRYKFCPTCGSATKIEEGGYKRVCVRETCPSLQGVHNTSYPRVDPVVIMQVIHPDGTKCLLGRQKRFPPGMFTCLAGFIEPGETIEDAVRREVEEESGVKVGHVQYVSCQPWPMPSSLMIGCLAVAVSTEIKVDKNEIEDARWFTREQVVDVLTKGKQQAFFVPPSRAIAHQLIKHWVGMNPNL.

The residue at position 10 (Lys-10) is an N6-succinyllysine. ANK repeat units follow at residues 11 to 40, 45 to 74, and 78 to 98; these read EMIS…SLLN, NGWT…DRSL, and ARQT…ANLL. The residue at position 185 (Lys-185) is an N6-succinyllysine. Zn(2+)-binding residues include Cys-284 and Cys-287. Lys-292 is modified (N6-succinyllysine). Positions 302 and 307 each coordinate Zn(2+). Substrate is bound by residues Tyr-318, 354-356, Glu-370, Glu-374, and Glu-415; that span reads AGF. One can recognise a Nudix hydrolase domain in the interval 319–453; the sequence is PRVDPVVIMQ…SRAIAHQLIK (135 aa). The Mg(2+) site is built by Ala-354, Glu-370, Glu-374, and Glu-415. A Nudix box motif is present at residues 355–376; sequence GFIEPGETIEDAVRREVEEESG. Residues 460–462 carry the Microbody targeting signal motif; that stretch reads PNL.

The protein belongs to the Nudix hydrolase family. NudC subfamily. Homodimer. Homodimerization is essential for its catalytic activity and protein stability. Interacts (via ANK repeats) with BLMH. Requires Mg(2+) as cofactor. It depends on Zn(2+) as a cofactor. In terms of tissue distribution, expressed abundantly in the liver and kidney.

It is found in the cytoplasm. The protein localises to the peroxisome. The protein resides in the cytoplasmic granule. It catalyses the reaction a 5'-end NAD(+)-phospho-ribonucleoside in mRNA + H2O = a 5'-end phospho-adenosine-phospho-ribonucleoside in mRNA + beta-nicotinamide D-ribonucleotide + 2 H(+). It carries out the reaction NAD(+) + H2O = beta-nicotinamide D-ribonucleotide + AMP + 2 H(+). The enzyme catalyses NADH + H2O = reduced beta-nicotinamide D-ribonucleotide + AMP + 2 H(+). The catalysed reaction is NADPH + H2O = reduced beta-nicotinamide D-ribonucleotide + adenosine 2',5'-bisphosphate + 2 H(+). Its function is as follows. mRNA decapping enzyme that specifically removes the nicotinamide adenine dinucleotide (NAD) cap from a subset of mRNAs by hydrolyzing the diphosphate linkage to produce nicotinamide mononucleotide (NMN) and 5' monophosphate mRNA. The NAD-cap is present at the 5'-end of some RNAs; in contrast to the canonical N7 methylguanosine (m7G) cap, the NAD cap promotes mRNA decay. Preferentially acts on NAD-capped transcripts in response to nutrient stress. Also acts on free nicotinamide adenine dinucleotide molecules: hydrolyzes NAD(H) into NMN(H) and AMP, and NADPH into NMNH and 2',5'-ADP. May act to regulate the concentration of peroxisomal nicotinamide nucleotide cofactors required for oxidative metabolism in this organelle. Regulates the levels of circadian clock components PER1, PER2, PER3 and CRY2 in the liver. The sequence is that of NAD-capped RNA hydrolase NUDT12 from Mus musculus (Mouse).